Consider the following 597-residue polypeptide: Probable serine/threonine-protein kinase DDB_G0281745 (597 aa).

Over residues 49–61 the composition is skewed to polar residues; the sequence is TIDNSNGKQSTTP. The tract at residues 49–320 is disordered; sequence TIDNSNGKQS…RNNESTATTA (272 aa). The segment covering 72 to 97 has biased composition (pro residues); sequence QPPPQQSQQQPPQPLKPIPATRPVPT. Positions 114 to 140 are enriched in polar residues; sequence TLPTTNSSTKYSTLPSRQFFEVSSSPG. The segment covering 157 to 168 has biased composition (low complexity); the sequence is SLSSNQNGSNLN. A compositionally biased stretch (pro residues) spans 208 to 234; the sequence is PSPPSPPLQSPQPTPQQQPPPLKPIPQ. Positions 235-264 are enriched in low complexity; the sequence is PQQQQQQQQQQQQQQQQQQQQQQQQQQQQQ. The span at 265 to 274 shows a compositional bias: pro residues; that stretch reads QPPPLKPIPQ. The segment covering 275–301 has biased composition (low complexity); it reads PQQSQPTQPIKSQIQIPITNTNGNTNG. One can recognise a Protein kinase domain in the interval 334–585; it reads KFVGNEIGSG…KVLDTIQNIY (252 aa). Residues 340–348 and K361 each bind ATP; that span reads IGSGKYGSV. The active-site Proton acceptor is the D454.

This sequence belongs to the protein kinase superfamily. TKL Ser/Thr protein kinase family.

The catalysed reaction is L-seryl-[protein] + ATP = O-phospho-L-seryl-[protein] + ADP + H(+). It carries out the reaction L-threonyl-[protein] + ATP = O-phospho-L-threonyl-[protein] + ADP + H(+). The protein is Probable serine/threonine-protein kinase DDB_G0281745 of Dictyostelium discoideum (Social amoeba).